Here is a 356-residue protein sequence, read N- to C-terminus: MRRELLLEKIETYKAIMPWYVLDYYQSKLAVPYSFTTLYEYLKEYKRFFDWLMDADLTKVPKIADIDLSTLEHLTKKDLEAFVLYLRERPSLNTYSTKEGLSQTTINRTLSALSSLYKYLTEEVENDQGEPYFYRNVMKKVSTKKKKETLASRAENIKQKLFLGDETLAFLDYVDKEYEQKLSNRAKSSFRKNKERDLAIIALLLASGVRLSEAVNLDLKDVNLNMMIIEVIRKGGKRDSVNVAGFAKGYLESYLAVRQRRYKAEKQDLAFFLTEYRGVPNRMDASSIEKMVGKYSEDFKIRVTPHKLRHTLATRLYDATKSQVLVSHQLGHSSTQVTDLYTHIVNDEQKNALDNL.

Residues 16–121 form the Core-binding (CB) domain; that stretch reads IMPWYVLDYY…ALSSLYKYLT (106 aa). Residues 169 to 354 enclose the Tyr recombinase domain; the sequence is AFLDYVDKEY…VNDEQKNALD (186 aa). Catalysis depends on residues Arg210, Lys234, His306, Arg309, and His332. Tyr341 (O-(3'-phospho-DNA)-tyrosine intermediate) is an active-site residue.

This sequence belongs to the 'phage' integrase family. XerS subfamily.

The protein localises to the cytoplasm. With respect to regulation, ftsK is required for recombination. In terms of biological role, site-specific tyrosine recombinase, which acts by catalyzing the cutting and rejoining of the recombining DNA molecules. Essential to convert dimers of the bacterial chromosome into monomers to permit their segregation at cell division. This chain is Tyrosine recombinase XerS, found in Streptococcus pyogenes serotype M2 (strain MGAS10270).